A 132-amino-acid polypeptide reads, in one-letter code: Probable histone H2A.1 (132 aa).

Positions 1–22 (MAGRGKTLGSGSAKKATTRSSK) are disordered.

The protein belongs to the histone H2A family. As to quaternary structure, the nucleosome is a histone octamer containing two molecules each of H2A, H2B, H3 and H4 assembled in one H3-H4 heterotetramer and two H2A-H2B heterodimers. The octamer wraps approximately 147 bp of DNA. Post-translationally, not ubiquitinated. Low level of expression; mainly in roots. Found in the root cap cells and in non dividing tissues of the plant, including the root elongation and maturation zones and the leaf veins.

The protein localises to the nucleus. It localises to the chromosome. Its function is as follows. Core component of nucleosome. Nucleosomes wrap and compact DNA into chromatin, limiting DNA accessibility to the cellular machineries which require DNA as a template. Histones thereby play a central role in transcription regulation, DNA repair, DNA replication and chromosomal stability. DNA accessibility is regulated via a complex set of post-translational modifications of histones, also called histone code, and nucleosome remodeling. The polypeptide is Probable histone H2A.1 (Arabidopsis thaliana (Mouse-ear cress)).